Here is a 357-residue protein sequence, read N- to C-terminus: Probable cinnamyl alcohol dehydrogenase (357 aa).

C47 is a Zn(2+) binding site. T49 serves as a coordination point for NADP(+). Zn(2+)-binding residues include H69, E70, C100, C103, C106, C114, and C163. NADP(+) is bound by residues T167, 188 to 193, 211 to 216, T251, G275, and 298 to 300; these read GLGGVG, SSSDKK, and SFI.

Belongs to the zinc-containing alcohol dehydrogenase family. As to quaternary structure, homodimer. Zn(2+) serves as cofactor.

It carries out the reaction (E)-cinnamyl alcohol + NADP(+) = (E)-cinnamaldehyde + NADPH + H(+). It catalyses the reaction (E)-coniferol + NADP(+) = (E)-coniferaldehyde + NADPH + H(+). The enzyme catalyses (E)-sinapyl alcohol + NADP(+) = (E)-sinapaldehyde + NADPH + H(+). The catalysed reaction is (E)-4-coumaroyl alcohol + NADP(+) = (E)-4-coumaraldehyde + NADPH + H(+). It carries out the reaction (E)-caffeyl alcohol + NADP(+) = (E)-caffeyl aldehyde + NADPH + H(+). The protein operates within aromatic compound metabolism; phenylpropanoid biosynthesis. In terms of biological role, involved in lignin biosynthesis. Catalyzes the final step specific for the production of lignin monomers. Catalyzes the NADPH-dependent reduction of coniferaldehyde, 5-hydroxyconiferaldehyde, sinapaldehyde, 4-coumaraldehyde and caffeyl aldehyde to their respective alcohols. This Populus deltoides (Eastern poplar) protein is Probable cinnamyl alcohol dehydrogenase.